Consider the following 97-residue polypeptide: Co-chaperonin GroES (97 aa).

Belongs to the GroES chaperonin family. Heptamer of 7 subunits arranged in a ring. Interacts with the chaperonin GroEL.

Its subcellular location is the cytoplasm. Functionally, together with the chaperonin GroEL, plays an essential role in assisting protein folding. The GroEL-GroES system forms a nano-cage that allows encapsulation of the non-native substrate proteins and provides a physical environment optimized to promote and accelerate protein folding. GroES binds to the apical surface of the GroEL ring, thereby capping the opening of the GroEL channel. This is Co-chaperonin GroES from Blochmanniella floridana.